The primary structure comprises 187 residues: tRNA (mnm(5)s(2)U34)-methyltransferase (187 aa).

S-adenosyl-L-methionine contacts are provided by Asn-31, Asn-33, Asp-51, Gln-53, His-77, and Glu-78.

Belongs to the methyltransferase superfamily. MnmM family. Homodimer.

It catalyses the reaction 5-aminomethyl-2-thiouridine(34) in tRNA + S-adenosyl-L-methionine = 5-methylaminomethyl-2-thiouridine(34) in tRNA + S-adenosyl-L-homocysteine + H(+). The protein operates within tRNA modification. Its function is as follows. Involved in the biosynthesis of 5-methylaminomethyl-2-thiouridine (mnm(5)s(2)U) at the wobble position (U34) in tRNA. Catalyzes the transfer of a methyl group from S-adenosyl-L-methionine to nm(5)s(2)U34 to form mnm(5)s(2)U34. The chain is tRNA (mnm(5)s(2)U34)-methyltransferase from Staphylococcus aureus (strain NCTC 8325 / PS 47).